Here is a 132-residue protein sequence, read N- to C-terminus: MTMTDPIADMLSRVRNASNAYHDTVSMPSSNLKVHIAEILKQEGYIADFTVEDAKVGKTLTIELKYGSTRQRSLSGVRRVSSPGLRVYAKSTNLPQVLGGLGVAIISTSQGLLTDRQASEKGVGGEVLAYVW.

The protein belongs to the universal ribosomal protein uS8 family. As to quaternary structure, part of the 30S ribosomal subunit. Contacts proteins S5 and S12.

In terms of biological role, one of the primary rRNA binding proteins, it binds directly to 16S rRNA central domain where it helps coordinate assembly of the platform of the 30S subunit. This is Small ribosomal subunit protein uS8 from Corynebacterium kroppenstedtii (strain DSM 44385 / JCM 11950 / CIP 105744 / CCUG 35717).